Consider the following 531-residue polypeptide: Transcription factor LG2 (531 aa).

2 disordered regions span residues 115–154 and 195–220; these read RHQQ…ASSA and LHGG…KLVD. Polar residues predominate over residues 116-154; the sequence is HQQQLHSGNSQSVGSTGTDSSSAQNTMSQMELVSPASSA. In terms of domain architecture, bZIP spans 220–264; sequence DAKTERRLAQNREAARKSRLRKKAYVQQLETSRIRLQQVEHELQR. Positions 222–242 are basic motif; sequence KTERRLAQNREAARKSRLRKK. The Nuclear localization signal signature appears at 224 to 231; sequence ERRLAQNR. Residues 248–262 are leucine-zipper; sequence LETSRIRLQQVEHEL. The region spanning 285–499 is the DOG1 domain; it reads AAMFDMEYAR…RALSNLWASR (215 aa).

Belongs to the bZIP family. In terms of assembly, binds DNA as a dimer. Expression in meristem/developing ligule regions.

The protein resides in the nucleus. Required for the formation of the blade-sheath boundary in leaves. Promotes flowering. This is Transcription factor LG2 from Zea mays (Maize).